Reading from the N-terminus, the 119-residue chain is NADH dehydrogenase [ubiquinone] 1 subunit C2 (119 aa).

The chain crosses the membrane as a helical span at residues 56 to 75 (GLHRQLLYITAFFFAGYYLV).

It belongs to the complex I NDUFC2 subunit family. As to quaternary structure, complex I is composed of 45 different subunits. Interacts with TMEM242.

It localises to the mitochondrion inner membrane. Its function is as follows. Accessory subunit of the mitochondrial membrane respiratory chain NADH dehydrogenase (Complex I), that is believed not to be involved in catalysis but required for the complex assembly. Complex I functions in the transfer of electrons from NADH to the respiratory chain. The immediate electron acceptor for the enzyme is believed to be ubiquinone. The protein is NADH dehydrogenase [ubiquinone] 1 subunit C2 of Pongo pygmaeus (Bornean orangutan).